The sequence spans 104 residues: Large ribosomal subunit protein uL24 (104 aa).

Belongs to the universal ribosomal protein uL24 family. In terms of assembly, part of the 50S ribosomal subunit.

One of two assembly initiator proteins, it binds directly to the 5'-end of the 23S rRNA, where it nucleates assembly of the 50S subunit. Its function is as follows. One of the proteins that surrounds the polypeptide exit tunnel on the outside of the subunit. This chain is Large ribosomal subunit protein uL24, found in Pseudomonas aeruginosa (strain LESB58).